The following is a 234-amino-acid chain: Large ribosomal subunit protein uL1 (234 aa).

The protein belongs to the universal ribosomal protein uL1 family. Part of the 50S ribosomal subunit.

In terms of biological role, binds directly to 23S rRNA. The L1 stalk is quite mobile in the ribosome, and is involved in E site tRNA release. Functionally, protein L1 is also a translational repressor protein, it controls the translation of the L11 operon by binding to its mRNA. The sequence is that of Large ribosomal subunit protein uL1 from Maridesulfovibrio salexigens (strain ATCC 14822 / DSM 2638 / NCIMB 8403 / VKM B-1763) (Desulfovibrio salexigens).